A 131-amino-acid polypeptide reads, in one-letter code: 14.7 kDa heat shock protein (131 aa).

Residues 1–11 are compositionally biased toward polar residues; it reads MSRNMEVNAGS. The disordered stretch occupies residues 1–20; it reads MSRNMEVNAGSSGEIPSPIR. Residues 22 to 131 enclose the sHSP domain; the sequence is RFQKSGSQAV…INVKERILHY (110 aa).

It belongs to the small heat shock protein (HSP20) family. As to quaternary structure, may form oligomeric structures.

The protein resides in the cytoplasm. The chain is 14.7 kDa heat shock protein (HSP14.7) from Arabidopsis thaliana (Mouse-ear cress).